The following is a 340-amino-acid chain: L-threonine 3-dehydrogenase (340 aa).

A Zn(2+)-binding site is contributed by Cys-38. Residues Thr-40 and His-43 each act as charge relay system in the active site. Positions 63, 64, 93, 96, 99, and 107 each coordinate Zn(2+). NAD(+)-binding positions include Ile-175, Asp-195, Arg-200, 261-263 (LGI), and 285-286 (IY).

This sequence belongs to the zinc-containing alcohol dehydrogenase family. As to quaternary structure, homotetramer. Zn(2+) is required as a cofactor.

The protein resides in the cytoplasm. The catalysed reaction is L-threonine + NAD(+) = (2S)-2-amino-3-oxobutanoate + NADH + H(+). It functions in the pathway amino-acid degradation; L-threonine degradation via oxydo-reductase pathway; glycine from L-threonine: step 1/2. Functionally, catalyzes the NAD(+)-dependent oxidation of L-threonine to 2-amino-3-ketobutyrate. This Xanthomonas oryzae pv. oryzae (strain MAFF 311018) protein is L-threonine 3-dehydrogenase.